A 494-amino-acid polypeptide reads, in one-letter code: UDP-N-acetylmuramoyl-L-alanyl-D-glutamate--L-lysine ligase (494 aa).

S30 provides a ligand contact to UDP-N-acetyl-alpha-D-muramoyl-L-alanyl-D-glutamate. Position 110–116 (110–116) interacts with ATP; that stretch reads GTNGKTS. UDP-N-acetyl-alpha-D-muramoyl-L-alanyl-D-glutamate-binding positions include 152 to 153, S179, and R187; that span reads TT. At K219 the chain carries N6-carboxylysine. The L-lysine recognition motif motif lies at 406–409; the sequence is DNPA.

It belongs to the MurCDEF family. MurE subfamily. In terms of processing, carboxylation is probably crucial for Mg(2+) binding and, consequently, for the gamma-phosphate positioning of ATP.

It localises to the cytoplasm. It carries out the reaction UDP-N-acetyl-alpha-D-muramoyl-L-alanyl-D-glutamate + L-lysine + ATP = UDP-N-acetyl-alpha-D-muramoyl-L-alanyl-gamma-D-glutamyl-L-lysine + ADP + phosphate + H(+). The protein operates within cell wall biogenesis; peptidoglycan biosynthesis. Catalyzes the addition of L-lysine to the nucleotide precursor UDP-N-acetylmuramoyl-L-alanyl-D-glutamate (UMAG) in the biosynthesis of bacterial cell-wall peptidoglycan. The chain is UDP-N-acetylmuramoyl-L-alanyl-D-glutamate--L-lysine ligase from Staphylococcus haemolyticus (strain JCSC1435).